Reading from the N-terminus, the 191-residue chain is Glycerol-3-phosphate acyltransferase (191 aa).

6 consecutive transmembrane segments (helical) span residues 7-27, 51-71, 80-100, 115-135, 139-159, and 161-181; these read ILVLSYLIGSIPFGLILSYIG, KLAVVTLILDSLKGFVSVMLA, FVFMSALFSIIGHMFPVWLSF, FIEYKFVIYFTIFWIIVFVIF, SLSSIISTISIMLLVYTHYSA, and ESITFLVMSLLVIVQHIENIV.

It belongs to the PlsY family. As to quaternary structure, probably interacts with PlsX.

It is found in the cell inner membrane. It catalyses the reaction an acyl phosphate + sn-glycerol 3-phosphate = a 1-acyl-sn-glycero-3-phosphate + phosphate. It participates in lipid metabolism; phospholipid metabolism. Catalyzes the transfer of an acyl group from acyl-phosphate (acyl-PO(4)) to glycerol-3-phosphate (G3P) to form lysophosphatidic acid (LPA). This enzyme utilizes acyl-phosphate as fatty acyl donor, but not acyl-CoA or acyl-ACP. This Ehrlichia canis (strain Jake) protein is Glycerol-3-phosphate acyltransferase.